The sequence spans 509 residues: MWIALLGIPILLAVLTLLLKHINKTYFILSLTKRVRTEDGSPLESKVAIMPGKTRFGNNLDILNFTPASVFNFVRESTAKAKGQNYLWYFLYAPMYNVVRPEEAEEVFQSTKLITKNVVYELIRPFLGDGLLISTDHKWHSRRKALTPAFHFNVLQSFLGIFKEECKKFLNVLEKNLDAELELNQVIPPFTLNNICETALGVKLDDMSEGNEYRKAIHAIEEVLIQRVCNPLMYYNWYFFVYGDYRKHLQNLRIVHDFSSRIIERKRQQFQQKQLGEVDEFGRKQRYAMLDTLLAAEADGQIDHQGICDEVNTFMFEGYDTTSTCLIFTLLMLALHEDVQKKCYEEVENLPEDSDDISMFQFNKLVYLECVIKESLRMFPSVPFIGRQCVEETVVNGMVMPKDTQISIHIYDIMRDPRHFPKPDLFQPDRFLPENTVNRHPFAYVPFSAGQRNCIGQKFAILEMKVLLAAVIRNFKLLPATQLEDLTFENGIVLRTQENIKVKLSKRVK.

E317 and C454 together coordinate heme.

Belongs to the cytochrome P450 family. Requires heme as cofactor.

The protein localises to the endoplasmic reticulum membrane. It is found in the microsome membrane. Functionally, may be involved in the metabolism of insect hormones and in the breakdown of synthetic insecticides. In Drosophila melanogaster (Fruit fly), this protein is Probable cytochrome P450 4ac1 (Cyp4ac1).